Here is a 1248-residue protein sequence, read N- to C-terminus: Cullin-associated NEDD8-dissociated protein 1 (1248 aa).

HEAT repeat units lie at residues 44 to 82 (DESE…KVKE), 127 to 165 (PNVC…RFGE), 168 to 206 (VPFH…QANS), 365 to 403 (EDFY…NTRL), 425 to 463 (IEQL…SLPG), 510 to 548 (HPHI…VIRP), 604 to 642 (QNEL…LRID), 644 to 682 (TPIL…NYSS), 861 to 900 (DLSS…GSLQ), 976 to 1014 (LVNP…DQPQ), and 1054 to 1093 (PSLV…TVDD).

The protein belongs to the CAND family.

In terms of biological role, key assembly factor of SCF (SKP1-CUL1-F-box protein) E3 ubiquitin ligase complexes that promotes the exchange of the substrate-recognition F-box subunit in SCF complexes, thereby playing a key role in the cellular repertoire of SCF complexes. Acts as a F-box protein exchange factor. Probably plays a similar role in other cullin-RING E3 ubiquitin ligase complexes. The protein is Cullin-associated NEDD8-dissociated protein 1 (Cand1) of Drosophila melanogaster (Fruit fly).